The following is a 971-amino-acid chain: Sodium/calcium exchanger 1 (971 aa).

The N-terminal stretch at 1-32 is a signal peptide; it reads MLRLSLPPNVSMGFRLVTLVALLFTHVDHITA. Residues 33–71 are Extracellular-facing; sequence DTEAETGGNETTECTGSYYCKKGVILPIWEPQDPSFGDK. Residue N41 is glycosylated (N-linked (GlcNAc...) asparagine). The helical transmembrane segment at 72-92 threads the bilayer; that stretch reads IARATVYFVAMVYMFLGVSII. Residues 93–133 are Cytoplasmic-facing; sequence ADRFMSSIEVITSQEKEITIKKPNGETTKTTVRIWNETVSN. Residues 134–154 form a helical membrane-spanning segment; it reads LTLMALGSSAPEILLSVIEVC. Residues 138 to 178 form an Alpha-1 repeat; it reads ALGSSAPEILLSVIEVCGHNFTAGDLGPSTIVGSAAFNMFI. Topologically, residues 155 to 167 are extracellular; it reads GHNFTAGDLGPST. N157 carries an N-linked (GlcNAc...) asparagine glycan. Residues 168-188 form a helical membrane-spanning segment; sequence IVGSAAFNMFIIIALCVYVVP. The Cytoplasmic segment spans residues 189-201; it reads DGETRKIKHLRVF. The helical transmembrane segment at 202-222 threads the bilayer; sequence FVTAAWSIFAYTWLYIILSVS. Residues 223-228 lie on the Extracellular side of the membrane; the sequence is SPGVVE. A helical transmembrane segment spans residues 229 to 249; it reads VWEGLLTFFFFPICVVFAWVA. At 250–798 the chain is on the cytoplasmic side; it reads DRRLLFYKYV…FVPPTEYWNG (549 aa). Positions 251-270 are putative calmodulin-binding region; sequence RRLLFYKYVYKRYRAGKQRG. Phosphoserine occurs at positions 282 and 389. Calx-beta domains are found at residues 393–493 and 524–624; these read VNMD…VHLS and ATIT…IEIG. Ca(2+)-binding residues include E417, D453, D478, D479, I481, E483, E486, D530, D531, D532, E548, D584, D610, E611, E612, and E716. Residues 799 to 819 form a helical membrane-spanning segment; it reads WACFIVSILMIGLLTAFIGDL. Over 820 to 822 the chain is Extracellular; sequence ASH. The chain crosses the membrane as a helical span at residues 823–843; that stretch reads FGCTIGLKDSVTAVVFVALGT. The stretch at 840–876 is one Alpha-2 repeat; that stretch reads ALGTSVPDTFASKVAATQDQYADASIGNVTGSNAVNV. Topologically, residues 844–872 are cytoplasmic; sequence SVPDTFASKVAATQDQYADASIGNVTGSN. The helical transmembrane segment at 873-893 threads the bilayer; that stretch reads AVNVFLGIGVAWSIAAIYHAA. Over 894 to 904 the chain is Extracellular; that stretch reads NGEQFKVSPGT. Residues 905 to 925 traverse the membrane as a helical segment; sequence LAFSVTLFTIFAFINVGVLLY. Residues 926 to 942 are Cytoplasmic-facing; it reads RRRPEIGGELGGPRTAK. The chain crosses the membrane as a helical span at residues 943–963; it reads LLTSSLFVLLWLLYIFFSSLE. Residues 964–971 are Extracellular-facing; the sequence is AYCHIKGF.

Belongs to the Ca(2+):cation antiporter (CaCA) (TC 2.A.19) family. SLC8 subfamily. In terms of tissue distribution, detected in heart, brain cortex and hippocampus (at protein level). Cardiac sarcolemma or brain, and spleen. Expressed in all regions of the kidney, highest levels of expression in the distal convoluted tubule. Expressed throughout the CNS, in decreasing order of abundance in hippocampus, cortex, cerebellum, hypothalamus, midbrain and striatum. Expressed in numerous regions of the brain including multiple cortical layers, hippocampus, septal nuclei, thalamic nuclei, cerebellum, hypothalamus, olfactory bulb and brainstem. Also expressed in various regions of the spinal cord, ventricles and atria of the heart, lung, adrenals and kidney. Isoform 4 seems to be a predominant isoform in aorta, stomach, liver, and kidney.

It is found in the cell membrane. The protein localises to the cell projection. The protein resides in the dendrite. The enzyme catalyses Ca(2+)(in) + 3 Na(+)(out) = Ca(2+)(out) + 3 Na(+)(in). Its activity is regulated as follows. Activated by micromolar levels of Ca(2+). With respect to regulation, only active at low calcium concentrations. Not activated by PKC. Active at all calcium levels tested. Activated by PKC. Its activity is regulated as follows. Only active at low calcium concentrations. Activated by PKC. Functionally, mediates the exchange of one Ca(2+) ion against three to four Na(+) ions across the cell membrane, and thereby contributes to the regulation of cytoplasmic Ca(2+) levels and Ca(2+)-dependent cellular processes. Contributes to Ca(2+) transport during excitation-contraction coupling in muscle. In a first phase, voltage-gated channels mediate the rapid increase of cytoplasmic Ca(2+) levels due to release of Ca(2+) stores from the endoplasmic reticulum. SLC8A1 mediates the export of Ca(2+) from the cell during the next phase, so that cytoplasmic Ca(2+) levels rapidly return to baseline. Required for normal embryonic heart development and the onset of heart contractions. In Rattus norvegicus (Rat), this protein is Sodium/calcium exchanger 1 (Slc8a1).